A 188-amino-acid polypeptide reads, in one-letter code: Elongation factor P (188 aa).

The residue at position 34 (lysine 34) is an N6-(3,6-diaminohexanoyl)-5-hydroxylysine.

The protein belongs to the elongation factor P family. In terms of processing, may be beta-lysylated on the epsilon-amino group of Lys-34 by the combined action of EpmA and EpmB, and then hydroxylated on the C5 position of the same residue by EpmC (if this protein is present). Lysylation is critical for the stimulatory effect of EF-P on peptide-bond formation. The lysylation moiety may extend toward the peptidyltransferase center and stabilize the terminal 3-CCA end of the tRNA. Hydroxylation of the C5 position on Lys-34 may allow additional potential stabilizing hydrogen-bond interactions with the P-tRNA.

The protein resides in the cytoplasm. The protein operates within protein biosynthesis; polypeptide chain elongation. In terms of biological role, involved in peptide bond synthesis. Alleviates ribosome stalling that occurs when 3 or more consecutive Pro residues or the sequence PPG is present in a protein, possibly by augmenting the peptidyl transferase activity of the ribosome. Modification of Lys-34 is required for alleviation. This chain is Elongation factor P, found in Photobacterium profundum (strain SS9).